Consider the following 87-residue polypeptide: Putative acyl-CoA-binding protein (87 aa).

The region spanning 1–86 (MSSTFEQAAA…VDELKTKYGM (86 aa)) is the ACB domain. An acyl-CoA is bound by residues K13, 28 to 32 (YALFK), K50, K54, and Y73.

Belongs to the ACBP family.

The protein resides in the cytoplasm. Its subcellular location is the nucleus. In terms of biological role, binds medium- and long-chain acyl-CoA esters with very high affinity and may function as an intracellular carrier of acyl-CoA esters. May enhance the activity of the ceramide synthase complex. In Schizosaccharomyces pombe (strain 972 / ATCC 24843) (Fission yeast), this protein is Putative acyl-CoA-binding protein.